Consider the following 516-residue polypeptide: Delta(24)-sterol reductase (516 aa).

The first 22 residues, 1–22, serve as a signal peptide directing secretion; sequence MEPAVSLAVCALLFLLWVRVKG. Residues 23 to 31 are Lumenal-facing; the sequence is LEFVLIHQR. Residues 32–52 traverse the membrane as a helical segment; it reads WVFVCLFLLPLSLIFDIYYYV. The Cytoplasmic segment spans residues 53-516; it reads RAWVVFKLSS…YDKICKAARH (464 aa). Residues 58-234 form the FAD-binding PCMH-type domain; sequence FKLSSAPRLH…VAAEIRIIPA (177 aa). 163–175 lines the FAD pocket; it reads TVGGLIMGTGIES.

It belongs to the FAD-binding oxidoreductase/transferase type 4 family. In terms of assembly, interacts with DHCR7; this interaction regulates DHCR7 activity. The cofactor is FAD.

It localises to the endoplasmic reticulum membrane. The protein resides in the golgi apparatus membrane. The catalysed reaction is cholesterol + NADP(+) = desmosterol + NADPH + H(+). It carries out the reaction lanosterol + NADPH + H(+) = 24,25-dihydrolanosterol + NADP(+). The enzyme catalyses 5alpha-cholest-8-en-3beta-ol + NADP(+) = zymosterol + NADPH + H(+). Its pathway is steroid biosynthesis; cholesterol biosynthesis. In terms of biological role, catalyzes the reduction of the delta-24 double bond of sterol intermediates during cholesterol biosynthesis. In addition to its cholesterol-synthesizing activity, can protect cells from oxidative stress by reducing caspase 3 activity during apoptosis induced by oxidative stress. Also protects against amyloid-beta peptide-induced apoptosis. This is Delta(24)-sterol reductase (DHCR24) from Macaca fascicularis (Crab-eating macaque).